Here is a 456-residue protein sequence, read N- to C-terminus: RuvB-like 1 (456 aa).

Residue K2 forms a Glycyl lysine isopeptide (Lys-Gly) (interchain with G-Cter in SUMO2) linkage. 70–77 (GPPGTGKT) is an ATP binding site. K225 participates in a covalent cross-link: Glycyl lysine isopeptide (Lys-Gly) (interchain with G-Cter in SUMO1); alternate. K225 participates in a covalent cross-link: Glycyl lysine isopeptide (Lys-Gly) (interchain with G-Cter in SUMO2); alternate. K445 participates in a covalent cross-link: Glycyl lysine isopeptide (Lys-Gly) (interchain with G-Cter in SUMO2). K453 carries the N6-acetyllysine modification.

The protein belongs to the RuvB family. Forms homohexameric rings. Can form a dodecamer with RUVBL2 made of two stacked hexameric rings; however, even though RUVBL1 and RUVBL2 are present in equimolar ratio, the oligomeric status of each hexamer is not known. Oligomerization may regulate binding to nucleic acids and conversely, binding to nucleic acids may affect the dodecameric assembly. Interaction of the complex with DHX34 results in conformational changes of the N-terminus of the RUVBL2 subunits, resulting in loss of nucleotide binding ability and ATP hydrolysis of the complex. Interacts with the transcriptional activation domain of MYC. Component of the RNA polymerase II holoenzyme complex. May also act to bridge the LEF1/TCF1-CTNNB1 complex and TBP. Component of the NuA4 histone acetyltransferase complex which contains the catalytic subunit KAT5/TIP60 and the subunits EP400, TRRAP/PAF400, BRD8/SMAP, EPC1, DMAP1/DNMAP1, RUVBL1/TIP49, RUVBL2, ING3, actin, ACTL6A/BAF53A, MORF4L1/MRG15, MORF4L2/MRGX, MRGBP, YEATS4/GAS41, VPS72/YL1 and MEAF6. The NuA4 complex interacts with MYC and the adenovirus E1A protein. RUVBL1 interacts with EP400. Component of a NuA4-related complex which contains EP400, TRRAP/PAF400, SRCAP, BRD8/SMAP, EPC1, DMAP1/DNMAP1, RUVBL1/TIP49, RUVBL2, actin, ACTL6A/BAF53A, VPS72 and YEATS4/GAS41. Component of the BAF53 complex, at least composed of ACTL6A/BAF53A, RUVBL1/TIP49, SMARCA2/BRM, and TRRAP/PAF400. Component of some MLL1/MLL complex, at least composed of the core components KMT2A/MLL1, ASH2L, HCFC1/HCF1, WDR5 and RBBP5, as well as the facultative components BACC1, CHD8, E2F6, HSP70, INO80C, KANSL1, LAS1L, MAX, MCRS1, MGA, MYST1/MOF, PELP1, PHF20, PRP31, RING2, RUVB1/TIP49A, RUVB2/TIP49B, SENP3, TAF1, TAF4, TAF6, TAF7, TAF9 and TEX10. Associates with alpha and gamma tubulins, particularly during metaphase and early anaphase. Interacts with NPAT. Component of the chromatin-remodeling INO80 complex; specifically part of a complex module associated with the helicase ATP-binding and the helicase C-terminal domain of INO80. Interacts with IGHMBP2. Interacts with OFD1. Interacts with HINT1. Component of a complex with USP49 and PSMC5. Component of a SWR1-like complex. Component of the R2TP complex composed at least of RUVBL1, RUVBL2, RPAP3 and PIHD1. Component of the PAQosome complex which is responsible for the biogenesis of several protein complexes and which consists of R2TP complex members RUVBL1, RUVBL2, RPAP3 and PIH1D1, URI complex members PFDN2, PFDN6, PDRG1, UXT and URI1 as well as ASDURF, POLR2E and DNAAF10/WDR92. Interacts with PIH1D1. Interacts with ITFG1. Interacts with WAC; WAC positively regulates MTOR activity by promoting the assembly of the TTT complex composed of TELO2, TTI1 and TTI2 and the RUVBL complex composed of RUVBL1 and RUVBL2 into the TTT-RUVBL complex which leads to the dimerization of the mTORC1 complex and its subsequent activation. The RUVBL1/RUVBL2 complex interacts with ZNHIT1 (via HIT-type zinc finger), ZNHIT3 (via HIT-type zinc finger), ZNHIT6 (via HIT-type zinc finger) and DDX59/ZNHIT5 (via HIT-type zinc finger) in the presence of ADP. Interacts with NOPCHAP1; the interaction is direct and disrupted upon ATP binding. Interacts with SMG1. Interacts with NOP2, NOP56 and NUFIP1. In terms of assembly, (Microbial infection) Interacts with Mumps L polymerase; this interaction regulates the viral transcription. In terms of tissue distribution, ubiquitously expressed with high expression in heart, skeletal muscle and testis.

The protein localises to the nucleus matrix. It is found in the nucleus. Its subcellular location is the nucleoplasm. The protein resides in the cytoplasm. It localises to the membrane. The protein localises to the cytoskeleton. It is found in the microtubule organizing center. Its subcellular location is the centrosome. The protein resides in the dynein axonemal particle. The enzyme catalyses ATP + H2O = ADP + phosphate + H(+). Possesses single-stranded DNA-stimulated ATPase and ATP-dependent DNA helicase (3' to 5') activity; hexamerization is thought to be critical for ATP hydrolysis and adjacent subunits in the ring-like structure contribute to the ATPase activity. Component of the NuA4 histone acetyltransferase complex which is involved in transcriptional activation of select genes principally by acetylation of nucleosomal histones H4 and H2A. This modification may both alter nucleosome-DNA interactions and promote interaction of the modified histones with other proteins which positively regulate transcription. This complex may be required for the activation of transcriptional programs associated with oncogene and proto-oncogene mediated growth induction, tumor suppressor mediated growth arrest and replicative senescence, apoptosis, and DNA repair. The NuA4 complex ATPase and helicase activities seem to be, at least in part, contributed by the association of RUVBL1 and RUVBL2 with EP400. NuA4 may also play a direct role in DNA repair when recruited to sites of DNA damage. Component of a SWR1-like complex that specifically mediates the removal of histone H2A.Z/H2AZ1 from the nucleosome. Proposed core component of the chromatin remodeling INO80 complex which exhibits DNA- and nucleosome-activated ATPase activity and catalyzes ATP-dependent nucleosome sliding. Plays an essential role in oncogenic transformation by MYC and also modulates transcriptional activation by the LEF1/TCF1-CTNNB1 complex. Essential for cell proliferation. May be able to bind plasminogen at cell surface and enhance plasminogen activation. The polypeptide is RuvB-like 1 (Homo sapiens (Human)).